A 502-amino-acid chain; its full sequence is Neuronal acetylcholine receptor subunit alpha-7 (502 aa).

The N-terminal stretch at 1–23 is a signal peptide; it reads MGLRALMLWLLAAAGLVRESLQG. Residues 24–233 are Extracellular-facing; sequence EFQRKLYKEL…VTMRRRTLYY (210 aa). Residues R42 and V44 each coordinate Ca(2+). 3 N-linked (GlcNAc...) asparagine glycosylation sites follow: N46, N90, and N133. Cysteines 150 and 164 form a disulfide. Positions 172 and 210 each coordinate Ca(2+). The cysteines at positions 212 and 213 are disulfide-linked. A run of 3 helical transmembrane segments spans residues 234 to 254, 262 to 282, and 295 to 315; these read GLNL…VFLL, ISLG…VAEI, and QYFA…VIVL. Residues 316-469 lie on the Cytoplasmic side of the membrane; it reads QYHHHDPDGG…WKFAASVVDR (154 aa). A helical transmembrane segment spans residues 470-490; the sequence is LCLMAFSVFTIICTIGILMSA.

The protein belongs to the ligand-gated ion channel (TC 1.A.9) family. Acetylcholine receptor (TC 1.A.9.1) subfamily. Alpha-7/CHRNA7 sub-subfamily. In terms of assembly, homopentamer. Can also form heteropentamers with CHRNB2, mainly found in basal forebrain cholinergic neurons.

The protein localises to the postsynaptic cell membrane. The protein resides in the cell membrane. It carries out the reaction Ca(2+)(in) = Ca(2+)(out). It catalyses the reaction K(+)(in) = K(+)(out). The enzyme catalyses Na(+)(in) = Na(+)(out). The catalysed reaction is choline(out) = choline(in). It carries out the reaction NH4(+)(in) = NH4(+)(out). It catalyses the reaction L-arginine(in) = L-arginine(out). The enzyme catalyses guanidine(out) = guanidine(in). Activated by a myriad of ligands such as acetylcholine, cytisine, nicotine, choline and epibatidine. Activity is modulated by positive allosteric modulators (PAMs), such as flavonoids, with a wide range of chemical diversity, pharmacological sensitivity and efficacy. AChR activity is inhibited by the antagonists alpha-conotoxons RgIA, ImI and ImII, small disulfide-constrained peptides from cone snails. In terms of biological role, component of neuronal acetylcholine receptors (nAChRs) that function as pentameric, ligand-gated cation channels with high calcium permeability among other activities. nAChRs are excitatory neurotrasnmitter receptors formed by a collection of nAChR subunits known to mediate synaptic transmission in the nervous system and the neuromuscular junction. Each nAchR subunit confers differential attributes to channel properties, including activation, deactivation and desensitization kinetics, pH sensitivity, cation permeability, and binding to allosteric modulators. CHRNA7 is an homooligomeric neuronal acetylcholine receptor abundantly expressed in the central nervous system. Characterized by a fast desensitization and high calcium permeability. Also expressed in non-neuronal cells such as immune cells like lymphocytes, monocytes and macrophages. This chain is Neuronal acetylcholine receptor subunit alpha-7 (CHRNA7), found in Gallus gallus (Chicken).